Reading from the N-terminus, the 155-residue chain is Small ribosomal subunit protein uS7cz/uS7cy (155 aa).

This sequence belongs to the universal ribosomal protein uS7 family. As to quaternary structure, part of the 30S ribosomal subunit.

The protein resides in the plastid. The protein localises to the chloroplast. One of the primary rRNA binding proteins, it binds directly to 16S rRNA where it nucleates assembly of the head domain of the 30S subunit. In Acorus calamus var. americanus (American sweet flag), this protein is Small ribosomal subunit protein uS7cz/uS7cy (rps7-A).